Reading from the N-terminus, the 231-residue chain is MSGTDMNVHKRTAAREAADMVKSGMVVGLGTGSTAAYMIERLGERVAEGLEIFGIPTSDDSEDKALKAGIPLTDFSAHRRIDIAIDGADEVQRGSLNLIKGLGGALLREKIVAQAAKRFVVIVDGTKPVDLLGERAPVPVEVISFGWECTAERLAACGARGVKPRTDRAGSLFVTDTGNMILDCHFGPIEKPEELAEKIDRIVGVVEHGMFLNMASEVLVATPDGVEHWEP.

Substrate-binding positions include 31 to 34 (TGST), 86 to 89 (DGAD), and 100 to 103 (KGLG). Catalysis depends on glutamate 109, which acts as the Proton acceptor. Position 127 (lysine 127) interacts with substrate.

The protein belongs to the ribose 5-phosphate isomerase family. In terms of assembly, homodimer.

It catalyses the reaction aldehydo-D-ribose 5-phosphate = D-ribulose 5-phosphate. The protein operates within carbohydrate degradation; pentose phosphate pathway; D-ribose 5-phosphate from D-ribulose 5-phosphate (non-oxidative stage): step 1/1. In terms of biological role, catalyzes the reversible conversion of ribose-5-phosphate to ribulose 5-phosphate. The polypeptide is Ribose-5-phosphate isomerase A (Gluconobacter oxydans (strain 621H) (Gluconobacter suboxydans)).